Reading from the N-terminus, the 501-residue chain is CUGBP Elav-like family member 1 (501 aa).

Residues 2–196 are binds strongly to URE; the sequence is NGSLDHPDQP…DTQKDKEQKR (195 aa). RRM domains lie at 16-99 and 108-188; these read IKMF…PADS and RKLF…FADT. Low complexity-rich tracts occupy residues 274 to 298 and 312 to 323; these read PTGS…TPSG and SSPTSSTSSSVN. Residues 274-323 are disordered; the sequence is PTGSSALTTSSSPLSVLTSSGTPSGQPAQSAWDAYKAGSSPTSSTSSSVN. The binds strongly to URE stretch occupies residues 397–501; the sequence is LLSQQNVSAA…KRSKNDSKPY (105 aa). The RRM 3 domain maps to 416 to 494; sequence ANLFIYHLPQ…KRLKVQLKRS (79 aa).

This sequence belongs to the CELF/BRUNOL family.

It is found in the nucleus. The protein localises to the cytoplasm. In terms of biological role, RNA-binding protein implicated in the regulation of several post-transcriptional events. May be involved in mRNA translation activation and stability. Involved in the regulation of muscle-specific splicing of alpha actinin pre-mRNAs via the binding to the UR-repeat element (URE) at the branch point of the non-muscle (NM) exon. This Danio rerio (Zebrafish) protein is CUGBP Elav-like family member 1 (celf1).